The sequence spans 1049 residues: Bifunctional cytochrome P450/NADPH--P450 reductase (1049 aa).

Residues 2–472 form a cytochrome P450 region; that stretch reads TIKEMPQPKT…STEQSAKKVR (471 aa). Tyrosine 52 is a binding site for (9Z)-hexadecenoate. Residue cysteine 401 participates in heme binding. The interval 473–1049 is NADPH--P450 reductase; the sequence is KKAENAHNTP…GRYAKDVWAG (577 aa). The Flavodoxin-like domain occupies 483–622; it reads LLVLYGSNMG…TYEEWREHMW (140 aa). Residues 489 to 494, 536 to 539, 570 to 572, and 578 to 580 contribute to the FMN site; these read SNMGTA, SYNG, CGD, and TYQ. An FAD-binding FR-type domain is found at 660–892; sequence HGAFSTNVVA…STPQSEFTLP (233 aa).

It in the N-terminal section; belongs to the cytochrome P450 family. FAD serves as cofactor. It depends on FMN as a cofactor. The cofactor is heme.

Its subcellular location is the cytoplasm. The enzyme catalyses 2 oxidized [cytochrome P450] + NADPH = 2 reduced [cytochrome P450] + NADP(+) + H(+). It catalyses the reaction an organic molecule + reduced [NADPH--hemoprotein reductase] + O2 = an alcohol + oxidized [NADPH--hemoprotein reductase] + H2O + H(+). Inhibited by N-(12-imidazolyl-dodecanoyl)-L-leucine. Its function is as follows. Functions as a fatty acid monooxygenase. Catalyzes hydroxylation of fatty acids at omega-1, omega-2 and omega-3 positions. Shows activity toward medium and long-chain fatty acids, with optimum chain lengths of 12, 14 and 16 carbons (lauric, myristic, and palmitic acids). Able to metabolize some of these primary metabolites to secondary and tertiary products. Marginal activity towards short chain lengths of 8-10 carbons. Hydroxylates highly branched fatty acids, which play an essential role in membrane fluidity regulation. Also displays a NADPH-dependent reductase activity in the C-terminal domain, which allows electron transfer from NADPH to the heme iron of the cytochrome P450 N-terminal domain. Involved in inactivation of quorum sensing signals of other competing bacteria by oxidazing efficiently acyl homoserine lactones (AHLs), molecules involved in quorum sensing signaling pathways, and their lactonolysis products acyl homoserines (AHs). This Priestia megaterium (strain ATCC 14581 / DSM 32 / CCUG 1817 / JCM 2506 / NBRC 15308 / NCIMB 9376 / NCTC 10342 / NRRL B-14308 / VKM B-512 / Ford 19) (Bacillus megaterium) protein is Bifunctional cytochrome P450/NADPH--P450 reductase.